A 418-amino-acid polypeptide reads, in one-letter code: Gamma-glutamyl phosphate reductase (418 aa).

It belongs to the gamma-glutamyl phosphate reductase family.

It is found in the cytoplasm. The enzyme catalyses L-glutamate 5-semialdehyde + phosphate + NADP(+) = L-glutamyl 5-phosphate + NADPH + H(+). The protein operates within amino-acid biosynthesis; L-proline biosynthesis; L-glutamate 5-semialdehyde from L-glutamate: step 2/2. In terms of biological role, catalyzes the NADPH-dependent reduction of L-glutamate 5-phosphate into L-glutamate 5-semialdehyde and phosphate. The product spontaneously undergoes cyclization to form 1-pyrroline-5-carboxylate. In Geotalea daltonii (strain DSM 22248 / JCM 15807 / FRC-32) (Geobacter daltonii), this protein is Gamma-glutamyl phosphate reductase.